A 64-amino-acid chain; its full sequence is Large ribosomal subunit protein bL35 (64 aa).

The protein belongs to the bacterial ribosomal protein bL35 family.

In Helicobacter hepaticus (strain ATCC 51449 / 3B1), this protein is Large ribosomal subunit protein bL35.